Reading from the N-terminus, the 355-residue chain is 3-isopropylmalate dehydrogenase (355 aa).

Positions 98, 108, 132, and 223 each coordinate substrate. Mg(2+) contacts are provided by aspartate 223, aspartate 247, and aspartate 251. 283-295 is a binding site for NAD(+); the sequence is GSAPDIAGQQKAD.

This sequence belongs to the isocitrate and isopropylmalate dehydrogenases family. LeuB type 2 subfamily. In terms of assembly, homodimer. It depends on Mg(2+) as a cofactor. Requires Mn(2+) as cofactor.

It localises to the cytoplasm. It carries out the reaction (2R,3S)-3-isopropylmalate + NAD(+) = 4-methyl-2-oxopentanoate + CO2 + NADH. Its pathway is amino-acid biosynthesis; L-leucine biosynthesis; L-leucine from 3-methyl-2-oxobutanoate: step 3/4. Functionally, catalyzes the oxidation of 3-carboxy-2-hydroxy-4-methylpentanoate (3-isopropylmalate) to 3-carboxy-4-methyl-2-oxopentanoate. The product decarboxylates to 4-methyl-2 oxopentanoate. The protein is 3-isopropylmalate dehydrogenase of Clavibacter michiganensis subsp. michiganensis (strain NCPPB 382).